The following is a 315-amino-acid chain: uncharacterized protein (315 aa).

3 helical membrane-spanning segments follow: residues 19–39 (IGAG…GNVF), 56–76 (TVLV…LHSF), and 81–101 (PLKK…ISLI). Polar residues predominate over residues 154–171 (EDSASSGRTSSSVNQPIQ). Residues 154–214 (EDSASSGRTS…EREARAQEHD (61 aa)) form a disordered region. Residues 203-214 (GGEREARAQEHD) show a composition bias toward basic and acidic residues.

It belongs to the ATPase C chain family.

It localises to the mitochondrion membrane. This is an uncharacterized protein from Arabidopsis thaliana (Mouse-ear cress).